We begin with the raw amino-acid sequence, 98 residues long: NADH-ubiquinone oxidoreductase chain 4L (98 aa).

3 consecutive transmembrane segments (helical) span residues 1–21, 29–49, and 61–81; these read MSLT…GLLL, SLLC…MTIL, and IILL…LVMV.

The protein belongs to the complex I subunit 4L family. Core subunit of respiratory chain NADH dehydrogenase (Complex I) which is composed of 45 different subunits.

Its subcellular location is the mitochondrion inner membrane. The catalysed reaction is a ubiquinone + NADH + 5 H(+)(in) = a ubiquinol + NAD(+) + 4 H(+)(out). Its function is as follows. Core subunit of the mitochondrial membrane respiratory chain NADH dehydrogenase (Complex I) which catalyzes electron transfer from NADH through the respiratory chain, using ubiquinone as an electron acceptor. Part of the enzyme membrane arm which is embedded in the lipid bilayer and involved in proton translocation. The chain is NADH-ubiquinone oxidoreductase chain 4L (MT-ND4L) from Vampyrodes caraccioli (Great stripe-faced bat).